The sequence spans 620 residues: Chaperone protein HscA homolog (620 aa).

It belongs to the heat shock protein 70 family.

Its function is as follows. Chaperone involved in the maturation of iron-sulfur cluster-containing proteins. Has a low intrinsic ATPase activity which is markedly stimulated by HscB. In Shewanella woodyi (strain ATCC 51908 / MS32), this protein is Chaperone protein HscA homolog.